The primary structure comprises 82 residues: Small ribosomal subunit protein uS17 (82 aa).

This sequence belongs to the universal ribosomal protein uS17 family. As to quaternary structure, part of the 30S ribosomal subunit.

In terms of biological role, one of the primary rRNA binding proteins, it binds specifically to the 5'-end of 16S ribosomal RNA. This chain is Small ribosomal subunit protein uS17, found in Shewanella piezotolerans (strain WP3 / JCM 13877).